A 563-amino-acid chain; its full sequence is Phosphomethylpyrimidine synthase (563 aa).

Residues Asn-180, Met-209, Tyr-238, His-274, 294–296, 335–338, and Glu-374 contribute to the substrate site; these read SRG and DGLR. Zn(2+) is bound at residue His-378. Tyr-401 serves as a coordination point for substrate. His-442 contacts Zn(2+). Cys-522, Cys-525, and Cys-530 together coordinate [4Fe-4S] cluster.

This sequence belongs to the ThiC family. Requires [4Fe-4S] cluster as cofactor.

It carries out the reaction 5-amino-1-(5-phospho-beta-D-ribosyl)imidazole + S-adenosyl-L-methionine = 4-amino-2-methyl-5-(phosphooxymethyl)pyrimidine + CO + 5'-deoxyadenosine + formate + L-methionine + 3 H(+). Its pathway is cofactor biosynthesis; thiamine diphosphate biosynthesis. In terms of biological role, catalyzes the synthesis of the hydroxymethylpyrimidine phosphate (HMP-P) moiety of thiamine from aminoimidazole ribotide (AIR) in a radical S-adenosyl-L-methionine (SAM)-dependent reaction. This is Phosphomethylpyrimidine synthase from Geobacillus thermodenitrificans (strain NG80-2).